The sequence spans 443 residues: Amino-acid acetyltransferase (443 aa).

The 140-residue stretch at 296–435 folds into the N-acetyltransferase domain; that stretch reads EQIRRATIND…KEMYNYQRRS (140 aa).

The protein belongs to the acetyltransferase family. ArgA subfamily. In terms of assembly, homohexamer.

It is found in the cytoplasm. The catalysed reaction is L-glutamate + acetyl-CoA = N-acetyl-L-glutamate + CoA + H(+). It functions in the pathway amino-acid biosynthesis; L-arginine biosynthesis; N(2)-acetyl-L-ornithine from L-glutamate: step 1/4. In Enterobacter sp. (strain 638), this protein is Amino-acid acetyltransferase.